We begin with the raw amino-acid sequence, 118 residues long: Acidic phospholipase A2 homolog (118 aa).

7 disulfides stabilise this stretch: Cys11/Cys70, Cys25/Cys117, Cys27/Cys43, Cys42/Cys98, Cys49/Cys91, Cys59/Cys84, and Cys77/Cys89.

The protein belongs to the phospholipase A2 family. Group I subfamily. A49 sub-subfamily. As to expression, expressed by the venom gland.

The protein resides in the secreted. In terms of biological role, snake venom phospholipase A2 (PLA2) homolog that lacks both catalytic and neurotoxicity activities. The polypeptide is Acidic phospholipase A2 homolog (Bungarus fasciatus (Banded krait)).